Consider the following 1047-residue polypeptide: MDSAIEISSGSDSDDEVPPQPVWPQTRTRMDPTWLSRRPLPTVDSHARAEHTNQAPPNGASSDTSRPGVSKPFTGNGNTVNSRISSGSGADYVRLSSEQALKRTLPPSFNSPPLPARSGTNNISNASGSRVGVDYERPLSQQALKRTLPPSFNPPPLPSRSGTNNIRNAGGSRFGADYSHPAVSAVGNKSTFGDHYSGAHAEIGIQRGVNGVRILPPSLTHGTSASVLHHAGSSDPMHRFGGGEDRNPDNDERLVYQAALQVLNQPMTESDLPPGTLSVPLMRHQKIALAWMFQKETSSFNCPGGILADDQGLGKTVSTIALILKQKIVSQLKSESSCKQETEALVLDADDESDNAKHESGSHVKPELKVSSNSETSVLSACGNDENDSSDMEKAEDEEANSSTRAFQWKRPAAGTLIVCPASVVRQWARELDEKVSEESKLSVLVYHGSNRTKDPNELAEYDVVVTTYAIVTNEAPNKFLVDEDENDEKNTDRYGLASGFSNNKKRKVVVGASKKSKRRGRKSTNDTSSEPDCGPLGKVGWFRIVLDEAQTIKNYRTQMARSCCTLRAKRRWCLSGTPIQNTIDDLYSYFRFLRYDPYAVYKSFYSTIKVPISRNSCQGYKKLQAVLRAIMLRRTKGTLLDGKPIINLPPKVVNLSQVDFSVAERSFYKKLEADSRSQFKAYADAGTLSQNYANILLLLLRLRQACDHPQLVKRYNSDPVGKVSEAAVRRLPREARSRLINRLESSSAICYECNEPPEKPVVTLCGHIFCYECVLEYITGDENTCPVPRCKQQLARDVVFSESSLRNCTSDDSGCSSSHDNGLDRSVFQKRDFCSSKIKAVLDILQSLSQPDSPNSAQHGQMPSSSRPYDDDDVTIVEPMRLHSSSPSQGAVKTIIFSQWTGMLDLVELRILESGIEFRRLDGTMSLAARDRAVKEFSKKPDVKVMLMSLKAGNLGLNMVAACHVILLDLWWNPTTEDQAIDRAHRIGQTRPVTVTRITIKDTVEDRILKLQEEKRTMVASAFGEEHGGSSATRLTVDDLKYLFMV.

Low complexity predominate over residues methionine 1–serine 11. Disordered regions lie at residues methionine 1–glycine 89, arginine 103–arginine 130, and lysine 145–phenylalanine 174. Composition is skewed to polar residues over residues threonine 52 to serine 88 and serine 118 to glycine 128. One can recognise a Helicase ATP-binding domain in the interval glutamate 296–aspartate 597. Residue aspartate 309–threonine 316 coordinates ATP. Disordered regions lie at residues alanine 349–phenylalanine 407 and valine 511–aspartate 533. Basic and acidic residues predominate over residues aspartate 354–leucine 368. Residues valine 370–leucine 379 show a composition bias toward polar residues. Residues aspartate 385–alanine 400 are compositionally biased toward acidic residues. Basic residues predominate over residues valine 511 to lysine 523. Residues cysteine 751 to arginine 790 form an RING-type; degenerate zinc finger. Positions glutamine 851–arginine 868 are enriched in polar residues. Positions glutamine 851–aspartate 873 are disordered. Residues serine 887–lysine 1042 enclose the Helicase C-terminal domain.

It belongs to the SNF2/RAD54 helicase family. RAD16 subfamily. In terms of assembly, interacts with SUVR2. Interacts with itself.

Its subcellular location is the nucleus. Probable helicase-like transcription factor involved in transcriptional gene silencing. Associates with SUVR2 and contributes to transcriptional gene silencing at RNA-directed DNA methylation (RdDM) target loci but also at RdDM-independent target loci. May be involved in nucleosome positioning to form ordered nucleosome arrays on chromatin. Associates with SUVR2 and functions redundantly with FRG2. Required for the efficient methylation of a broad range of RdDM target loci. The sequence is that of Helicase-like transcription factor CHR27 from Arabidopsis thaliana (Mouse-ear cress).